A 397-amino-acid chain; its full sequence is Chorismate synthase (397 aa).

Residues Arg40 and Arg46 each contribute to the NADP(+) site. Residues 129–131 (RAS), 257–258 (QA), Gly302, 317–321 (KPIAT), and Arg343 each bind FMN.

It belongs to the chorismate synthase family. In terms of assembly, homotetramer. It depends on FMNH2 as a cofactor.

It catalyses the reaction 5-O-(1-carboxyvinyl)-3-phosphoshikimate = chorismate + phosphate. Its pathway is metabolic intermediate biosynthesis; chorismate biosynthesis; chorismate from D-erythrose 4-phosphate and phosphoenolpyruvate: step 7/7. Functionally, catalyzes the anti-1,4-elimination of the C-3 phosphate and the C-6 proR hydrogen from 5-enolpyruvylshikimate-3-phosphate (EPSP) to yield chorismate, which is the branch point compound that serves as the starting substrate for the three terminal pathways of aromatic amino acid biosynthesis. This reaction introduces a second double bond into the aromatic ring system. This is Chorismate synthase from Chlorobium phaeobacteroides (strain BS1).